Here is a 33-residue protein sequence, read N- to C-terminus: pyr operon leader peptide (33 aa).

This chain is pyr operon leader peptide (pyrL), found in Salmonella typhi.